Consider the following 1120-residue polypeptide: Mechanosensitive channel MscK (1120 aa).

The N-terminal stretch at 1 to 33 (MTMFQYYKRSRHFVFSAFIAFVFVLLCQNTAFA) is a signal peptide. The Periplasmic portion of the chain corresponds to 34-499 (RASSNGDLPT…MKITVNWQKA (466 aa)). Coiled coils occupy residues 43 to 98 (TKAD…VAEA), 126 to 266 (STLS…TLTE), and 360 to 422 (DELE…RREL). The chain crosses the membrane as a helical span at residues 500 to 520 (WPAVFIAFLAGLPLLLIAGLI). The Cytoplasmic segment spans residues 521–560 (HWRLGWLKAYQQKLASAVGSLRNDSQLNTPKAILIDLIRA). Residues 561–581 (LPVCLIILAVGLILLTMQLNI) traverse the membrane as a helical segment. Serine 582 is a topological domain (periplasmic). The helical transmembrane segment at 583 to 603 (ELLWSFSKKLAIFWLVFGLCW) threads the bilayer. Residues 604–634 (KVLEKNGVAVRHFGMPEQQTSHWRRQIVRIS) are Cytoplasmic-facing. The helical transmembrane segment at 635-655 (LALLPIHFWSVVAELSPLHLM) threads the bilayer. Residues 656-657 (DD) are Periplasmic-facing. Residues 658–678 (VLGQAMIFFNLLLIAFLVWPM) form a helical membrane-spanning segment. At 679–692 (CRESWRDKESHTMR) the chain is on the cytoplasmic side. The chain crosses the membrane as a helical span at residues 693–713 (LVTITVLSIIPIALMVLTATG). Residues 714-728 (YFYTTLRLAGRWIET) lie on the Periplasmic side of the membrane. Residues 729–749 (VYLVIIWNLLYQTVLRGLSVA) form a helical membrane-spanning segment. At 750-796 (ARRIAWRRALARRQNLVKEGAEGAEPPEEPTIALEQVNQQTLRITML) the chain is on the cytoplasmic side. The chain crosses the membrane as a helical span at residues 797-817 (LMFALFGVMFWAIWSDLITVF). The Periplasmic portion of the chain corresponds to 818–839 (SYLDSITLWHYNGTEAGAAVVK). Residues 840-860 (NVTMGSLLFAIIASMVAWALI) traverse the membrane as a helical segment. Residues 861 to 886 (RNLPGLLEVLVLSRLNMRQGASYAIT) lie on the Cytoplasmic side of the membrane. Residues 887–907 (TILNYIIIAVGAMTVFGSLGV) traverse the membrane as a helical segment. The Periplasmic segment spans residues 908 to 921 (SWDKLQWLAAALSV). The helical transmembrane segment at 922-942 (GLGFGLQEIFGNFVSGLIILF) threads the bilayer. Topologically, residues 943-1120 (ERPVRIGDTV…KGDDPTPAVG (178 aa)) are cytoplasmic. Positions 1057-1081 (YVRELRDRSRTVDELNRTIDQLCRE) form a coiled coil.

The protein belongs to the MscS (TC 1.A.23) family.

The protein localises to the cell inner membrane. Its function is as follows. Mechanosensitive channel that opens in response to membrane tension and specific ionic conditions. Requires high concentrations of external K(+), NH(4)(+), Rb(+) or Cs(+) to gate. May participate in the regulation of osmotic pressure changes within the cell, although it does not appear to have a major role in osmolarity regulation. Forms an ion channel of 1.0 nanosiemens conductance. The channel can remain active for between 30 seconds and over 3 minutes; it does not desensitize upon extended pressure. Its activity is masked in wild-type cells by the MscS channel. In Escherichia coli (strain K12), this protein is Mechanosensitive channel MscK (mscK).